A 635-amino-acid polypeptide reads, in one-letter code: Threonine--tRNA ligase (635 aa).

One can recognise a TGS domain in the interval 1 to 61 (MITVRLPDGS…EQDSDLSIIT (61 aa)). Positions 242–533 (DHRKLGRALD…LIENHAGALP (292 aa)) are catalytic. Zn(2+) contacts are provided by C333, H384, and H510.

The protein belongs to the class-II aminoacyl-tRNA synthetase family. In terms of assembly, homodimer. Zn(2+) is required as a cofactor.

It localises to the cytoplasm. The catalysed reaction is tRNA(Thr) + L-threonine + ATP = L-threonyl-tRNA(Thr) + AMP + diphosphate + H(+). Catalyzes the attachment of threonine to tRNA(Thr) in a two-step reaction: L-threonine is first activated by ATP to form Thr-AMP and then transferred to the acceptor end of tRNA(Thr). Also edits incorrectly charged L-seryl-tRNA(Thr). In Herminiimonas arsenicoxydans, this protein is Threonine--tRNA ligase.